Consider the following 520-residue polypeptide: MNSKCDVVVVGGGISGLAAAKLLHDSGLNVVVLEARDCVGGRTYTLRNQNVKYVDLGGAYVGPTQNRILRLAKELGLETYRVNDVERQIHHVKGKSYPFRGPFPPAWNPISYLDHNNLWRTMDDMGKEIPSDAPWKAPLAEEWDHMTMKELLNKICWTNCPRQFGTLFVNLCFTAETHEVSALWFLWYVKQCGGTTRIISTTNGGQERKFVGGSGQISERIMNLLGDRVKLQRPVVYIDQTGESVLVETLNHEIYEAKYVISAIPPALGMKIHFKPPLPMMKNQLVSRVPLGSVIKCIVYYKDPFWRKKDFCGTMVIEGEEAPVLYTMDDTKPDGSYAAIIGFIAAHKARKLARLTKEERLKKLCELYAKVLGSKEALKPVHYEEKNWCEEQYSGGCYTAYFPPGIMTQYGRFLRQPVGRIFFAGTETATHWSGYMEGAVEAGERAAREVLNAIGKIPEDEIWQPEPESVDVPAQPITTTFLERHLPSVPGLLRLIRLTTVVSAVALGFLAQKRGLLLRI.

The Cytoplasmic segment spans residues 1–489 (MNSKCDVVVV…TFLERHLPSV (489 aa)). Lysine 52 is modified (N6-acetyllysine). Cysteine 397 bears the S-8alpha-FAD cysteine mark. The helical; Anchor for type IV membrane protein transmembrane segment at 490 to 516 (PGLLRLIRLTTVVSAVALGFLAQKRGL) threads the bilayer. Over 517 to 520 (LLRI) the chain is Mitochondrial intermembrane.

The protein belongs to the flavin monoamine oxidase family. As to quaternary structure, monomer, homo- or heterodimer (containing two subunits of similar size). Each subunit contains a covalently bound flavin. Enzymatically active as monomer. Requires FAD as cofactor.

It is found in the mitochondrion outer membrane. The catalysed reaction is a secondary aliphatic amine + O2 + H2O = a primary amine + an aldehyde + H2O2. It catalyses the reaction (R)-adrenaline + O2 + H2O = (R)-3,4-dihydroxymandelaldehyde + methylamine + H2O2. It carries out the reaction a primary methyl amine + O2 + H2O = an aldehyde + H2O2 + NH4(+). The enzyme catalyses benzylamine + O2 + H2O = benzaldehyde + H2O2 + NH4(+). The catalysed reaction is dopamine + O2 + H2O = 3,4-dihydroxyphenylacetaldehyde + H2O2 + NH4(+). It catalyses the reaction tyramine + O2 + H2O = (4-hydroxyphenyl)acetaldehyde + H2O2 + NH4(+). It carries out the reaction (R)-noradrenaline + O2 + H2O = (R)-3,4-dihydroxymandelaldehyde + H2O2 + NH4(+). The enzyme catalyses 2-phenylethylamine + O2 + H2O = 2-phenylacetaldehyde + H2O2 + NH4(+). The catalysed reaction is N-acetylputrescine + O2 + H2O = 4-acetamidobutanal + H2O2 + NH4(+). Its function is as follows. Catalyzes the oxidative deamination of primary and some secondary amines such as neurotransmitters, and exogenous amines including the tertiary amine, neurotoxin 1-methyl-4-phenyl-1,2,3,6-tetrahydropyridine (MPTP), with concomitant reduction of oxygen to hydrogen peroxide and participates in the metabolism of neuroactive and vasoactive amines in the central nervous system and peripheral tissues. Preferentially degrades benzylamine and phenylethylamine. This is Amine oxidase [flavin-containing] B from Cavia porcellus (Guinea pig).